A 60-amino-acid polypeptide reads, in one-letter code: Large ribosomal subunit protein uL30 (60 aa).

This sequence belongs to the universal ribosomal protein uL30 family. In terms of assembly, part of the 50S ribosomal subunit.

The protein is Large ribosomal subunit protein uL30 of Streptococcus suis (strain 98HAH33).